Here is a 412-residue protein sequence, read N- to C-terminus: NADH-quinone oxidoreductase subunit D (412 aa).

Belongs to the complex I 49 kDa subunit family. NDH-1 is composed of 14 different subunits. Subunits NuoB, C, D, E, F, and G constitute the peripheral sector of the complex.

The protein resides in the cell inner membrane. It catalyses the reaction a quinone + NADH + 5 H(+)(in) = a quinol + NAD(+) + 4 H(+)(out). NDH-1 shuttles electrons from NADH, via FMN and iron-sulfur (Fe-S) centers, to quinones in the respiratory chain. The immediate electron acceptor for the enzyme in this species is believed to be ubiquinone. Couples the redox reaction to proton translocation (for every two electrons transferred, four hydrogen ions are translocated across the cytoplasmic membrane), and thus conserves the redox energy in a proton gradient. This chain is NADH-quinone oxidoreductase subunit D, found in Sulfurimonas denitrificans (strain ATCC 33889 / DSM 1251) (Thiomicrospira denitrificans (strain ATCC 33889 / DSM 1251)).